Here is a 207-residue protein sequence, read N- to C-terminus: Putative 3-methyladenine DNA glycosylase (207 aa).

It belongs to the DNA glycosylase MPG family.

The protein is Putative 3-methyladenine DNA glycosylase of Burkholderia orbicola (strain MC0-3).